The sequence spans 320 residues: Cytosolic Fe-S cluster assembly factor NUBP1 (320 aa).

Position 1 is an N-acetylmethionine (Met-1). Cys-8, Cys-22, Cys-25, and Cys-31 together coordinate [4Fe-4S] cluster. 62-69 (GKGGVGKS) contributes to the ATP binding site. Positions 235 and 238 each coordinate [4Fe-4S] cluster.

It belongs to the Mrp/NBP35 ATP-binding proteins family. NUBP1/NBP35 subfamily. As to quaternary structure, heterotetramer of 2 NUBP1 and 2 NUBP2 chains. Interacts with KIFC1. Interacts with the BBS/CCT complex subunit CCT1. Requires [4Fe-4S] cluster as cofactor.

The protein localises to the cytoplasm. Its subcellular location is the nucleus. It is found in the cell projection. The protein resides in the cytoskeleton. It localises to the cilium axoneme. The protein localises to the cilium basal body. Its subcellular location is the microtubule organizing center. It is found in the centrosome. The protein resides in the centriole. Functionally, component of the cytosolic iron-sulfur (Fe/S) protein assembly (CIA) machinery. Required for maturation of extramitochondrial Fe-S proteins. The NUBP1-NUBP2 heterotetramer forms a Fe-S scaffold complex, mediating the de novo assembly of an Fe-S cluster and its transfer to target apoproteins. Implicated in the regulation of centrosome duplication. Negatively regulates cilium formation and structure. This Bos taurus (Bovine) protein is Cytosolic Fe-S cluster assembly factor NUBP1.